Consider the following 161-residue polypeptide: Terminase, small subunit (161 aa).

The tract at residues 37 to 60 (KAEPFWHDNIRSKALDSWTPADLL) is helix-turn-helix (HTH). Residues 88–115 (EERDEGLIKDLRKQIVELQRTILAQRRD) are a coiled coil. 5 residues coordinate DNA: Lys96, Lys100, Arg107, Arg114, and Arg128.

This sequence belongs to the Hendrixvirinae small terminase family. Homononamer; forms a ring-like structure through which genomic DNA is translocated into the capsid. Interacts with the terminase small subunit; the active complex is composed of a pentamer ring of terminase large subunits and a nonamer ring of terminase small subunits. Binds a specific sequence on the viral genome. DNA transits through the central tunnel formed by the small subunit and sequence-specific recognition for packaging initiation and termination takes place as it emerges.

In terms of biological role, the terminase small subunit binds to the packaging initiation site and regulates the ATPase activity of the terminase large subunit. The terminase lies at a unique vertex of the procapsid and is composed of two subunits, a small terminase subunit involved in viral DNA recognition (packaging sequence), and a large terminase subunit possessing endonucleolytic and ATPase activities. Both terminase subunits heterooligomerize and are docked on the portal protein to form the packaging machine. Packaging initiates by TerS recognizing the packaging sequence in the viral DNA. The nuclease activity of TerL cuts the viral DNA and the terminase-DNA complex binds to the portal of a procapsid shell. DNA is translocated into the capsid, powered by the packaging ATPase in TerL, which continues until the next site is encountered at which point the motor stops and again cuts the DNA to release the nucleocapsid filled with a unit-length genome ('unit length' packaging). The polypeptide is Terminase, small subunit (1) (Escherichia coli (Bacteriophage HK97)).